The primary structure comprises 243 residues: Small ribosomal subunit protein uS5 (243 aa).

Over residues 1–10 (MSDNETKETQ) the composition is skewed to basic and acidic residues. The interval 1–50 (MSDNETKETQVAEETQNTVATESNNEDRKGRRGQRGEGRRGERRNRREEN) is disordered. Positions 12 to 23 (AEETQNTVATES) are enriched in polar residues. Residues 25–50 (NEDRKGRRGQRGEGRRGERRNRREEN) show a composition bias toward basic and acidic residues. One can recognise an S5 DRBM domain in the interval 55-118 (LLDRVVTINR…LDAKKHMFSV (64 aa)).

This sequence belongs to the universal ribosomal protein uS5 family. Part of the 30S ribosomal subunit. Contacts proteins S4 and S8.

With S4 and S12 plays an important role in translational accuracy. Functionally, located at the back of the 30S subunit body where it stabilizes the conformation of the head with respect to the body. This Bifidobacterium longum (strain DJO10A) protein is Small ribosomal subunit protein uS5.